Consider the following 593-residue polypeptide: F-box/LRR-repeat protein 17 (593 aa).

In terms of domain architecture, F-box spans 120–177 (DLDLQLDTDIVQPGRFHAVGLWEVLKRLPPSSLLMAARVCKGWRETSRKMWKAAEELR). LRR repeat units lie at residues 178–206 (IRVP…SLKI), 207–232 (ESDF…EITT), 237–262 (VNRI…KMEG), 276–304 (LSTL…SLEF), 335–361 (SLKL…SLVL), 362–387 (GINI…DLSG), 414–439 (CPNI…DCGM), 477–502 (LSLW…NLNL), and 503–525 (CSNL…YASG).

As to quaternary structure, part of a SCF (ASK-cullin-F-box) protein ligase complex. Interacts with SKP1A/ASK1, KRP4, KRP6 and KRP7. As to expression, expressed in developing pollen.

It localises to the nucleus. Its pathway is protein modification; protein ubiquitination. Essential protein for male fertility. Component of the SCF(ASK-cullin-F-box) E3 ubiquitin ligase complex SCF(FBL17), which mediates the ubiquitination and subsequent proteasomal degradation of target proteins. Enables the switch in cell cycle control leading to male germ cell lineage formation from microspores after meiosis. Targets CDKA-1 inhibitors the degradation specifically in male germ cells (e.g. KRP6 and KRP7) and thus enables CDKA-1 activation and germ cell S-phase progression. Promotes twin sperm cell production and double fertilization. This chain is F-box/LRR-repeat protein 17 (FBL17), found in Arabidopsis thaliana (Mouse-ear cress).